An 84-amino-acid polypeptide reads, in one-letter code: Small ribosomal subunit protein uS17 (84 aa).

Belongs to the universal ribosomal protein uS17 family. Part of the 30S ribosomal subunit.

Its function is as follows. One of the primary rRNA binding proteins, it binds specifically to the 5'-end of 16S ribosomal RNA. This chain is Small ribosomal subunit protein uS17, found in Borreliella burgdorferi (strain ATCC 35210 / DSM 4680 / CIP 102532 / B31) (Borrelia burgdorferi).